The following is a 459-amino-acid chain: Ribosomal protein uS12 methylthiotransferase RimO (459 aa).

In terms of domain architecture, MTTase N-terminal spans 11–126 (PKVGMVSLGC…VMQAVHSHLP (116 aa)). 6 residues coordinate [4Fe-4S] cluster: C20, C56, C85, C157, C161, and C164. Positions 143–388 (LTPRHYAYLK…MEVAEEVSAA (246 aa)) constitute a Radical SAM core domain. One can recognise a TRAM domain in the interval 391–459 (ARKVGKTLKV…ADGHDLWGEV (69 aa)).

This sequence belongs to the methylthiotransferase family. RimO subfamily. Requires [4Fe-4S] cluster as cofactor.

It localises to the cytoplasm. The catalysed reaction is L-aspartate(89)-[ribosomal protein uS12]-hydrogen + (sulfur carrier)-SH + AH2 + 2 S-adenosyl-L-methionine = 3-methylsulfanyl-L-aspartate(89)-[ribosomal protein uS12]-hydrogen + (sulfur carrier)-H + 5'-deoxyadenosine + L-methionine + A + S-adenosyl-L-homocysteine + 2 H(+). Catalyzes the methylthiolation of an aspartic acid residue of ribosomal protein uS12. In Burkholderia pseudomallei (strain K96243), this protein is Ribosomal protein uS12 methylthiotransferase RimO.